A 439-amino-acid polypeptide reads, in one-letter code: Xylose isomerase (439 aa).

Residues His-101 and Asp-104 contribute to the active site. The Mg(2+) site is built by Glu-232, Glu-268, His-271, Asp-296, Asp-307, Asp-309, and Asp-339.

This sequence belongs to the xylose isomerase family. Homotetramer. Mg(2+) serves as cofactor.

The protein localises to the cytoplasm. The enzyme catalyses alpha-D-xylose = alpha-D-xylulofuranose. This is Xylose isomerase from Marinomonas sp. (strain MWYL1).